The sequence spans 61 residues: Transmembrane protein 300R (61 aa).

Helical transmembrane passes span 5–25 (FLDLYMILSVLAGVIGIFYLT) and 35–55 (SLSYYMTLSVVTGILALIYLQ).

Its subcellular location is the membrane. The polypeptide is Transmembrane protein 300R (Invertebrate iridescent virus 6 (IIV-6)).